Consider the following 154-residue polypeptide: Ribonuclease H (154 aa).

An RNase H type-1 domain is found at methionine 1–glutamate 141. Residues aspartate 9, glutamate 47, aspartate 69, and aspartate 133 each contribute to the Mg(2+) site.

This sequence belongs to the RNase H family. In terms of assembly, monomer. Mg(2+) is required as a cofactor.

The protein resides in the cytoplasm. It catalyses the reaction Endonucleolytic cleavage to 5'-phosphomonoester.. In terms of biological role, endonuclease that specifically degrades the RNA of RNA-DNA hybrids. This Brucella anthropi (strain ATCC 49188 / DSM 6882 / CCUG 24695 / JCM 21032 / LMG 3331 / NBRC 15819 / NCTC 12168 / Alc 37) (Ochrobactrum anthropi) protein is Ribonuclease H.